A 76-amino-acid chain; its full sequence is Kappa-actitoxin-Avd4c (76 aa).

A signal peptide spans 1 to 19; it reads MNKALFLCLVVLCAAVVFA. The propeptide occupies 20-31; that stretch reads AEDLQKAKHAPF. 3 cysteine pairs are disulfide-bonded: C37/C72, C39/C65, and C55/C73.

The protein belongs to the sea anemone type 3 (BDS) potassium channel toxin family. As to expression, moderately expressed in the ectodermal tissue from the distal and proximal tentacles, body wall, and oral disk.

It localises to the secreted. The protein resides in the nematocyst. Blocks Kv3 voltage-gated potassium channels. Reduces blood pressure. This Anemonia viridis (Snakelocks anemone) protein is Kappa-actitoxin-Avd4c.